The following is a 361-amino-acid chain: Alanine racemase (361 aa).

The Proton acceptor; specific for D-alanine role is filled by Lys34. Residue Lys34 is modified to N6-(pyridoxal phosphate)lysine. Arg129 contributes to the substrate binding site. Residue Tyr256 is the Proton acceptor; specific for L-alanine of the active site. Met304 contacts substrate.

It belongs to the alanine racemase family. Pyridoxal 5'-phosphate is required as a cofactor.

The enzyme catalyses L-alanine = D-alanine. The protein operates within amino-acid biosynthesis; D-alanine biosynthesis; D-alanine from L-alanine: step 1/1. Its function is as follows. Catalyzes the interconversion of L-alanine and D-alanine. May also act on other amino acids. In Corynebacterium glutamicum (strain R), this protein is Alanine racemase (alr).